Here is a 241-residue protein sequence, read N- to C-terminus: Carboxy-S-adenosyl-L-methionine synthase (241 aa).

Residues tyrosine 38, 63–65, 88–89, 116–117, asparagine 131, and arginine 198 each bind S-adenosyl-L-methionine; these read GCS, DN, and DI.

It belongs to the class I-like SAM-binding methyltransferase superfamily. Cx-SAM synthase family. Homodimer.

It catalyses the reaction prephenate + S-adenosyl-L-methionine = carboxy-S-adenosyl-L-methionine + 3-phenylpyruvate + H2O. Its function is as follows. Catalyzes the conversion of S-adenosyl-L-methionine (SAM) to carboxy-S-adenosyl-L-methionine (Cx-SAM). In Haemophilus influenzae (strain ATCC 51907 / DSM 11121 / KW20 / Rd), this protein is Carboxy-S-adenosyl-L-methionine synthase.